A 204-amino-acid chain; its full sequence is Holliday junction branch migration complex subunit RuvA (204 aa).

Residues 1 to 64 (MISRMKGIIL…EDAQLLYGFH (64 aa)) are domain I. Positions 65-143 (HPKERAMFSE…NLNKNLFKST (79 aa)) are domain II. The flexible linker stretch occupies residues 144–155 (ADHMLSSVSTDL). The domain III stretch occupies residues 156–204 (SAKSAEAEAISALISLGYKPQEAAQLIKNIAQPDLDSQALIKHALRSTL).

Belongs to the RuvA family. In terms of assembly, homotetramer. Forms an RuvA(8)-RuvB(12)-Holliday junction (HJ) complex. HJ DNA is sandwiched between 2 RuvA tetramers; dsDNA enters through RuvA and exits via RuvB. An RuvB hexamer assembles on each DNA strand where it exits the tetramer. Each RuvB hexamer is contacted by two RuvA subunits (via domain III) on 2 adjacent RuvB subunits; this complex drives branch migration. In the full resolvosome a probable DNA-RuvA(4)-RuvB(12)-RuvC(2) complex forms which resolves the HJ.

The protein resides in the cytoplasm. In terms of biological role, the RuvA-RuvB-RuvC complex processes Holliday junction (HJ) DNA during genetic recombination and DNA repair, while the RuvA-RuvB complex plays an important role in the rescue of blocked DNA replication forks via replication fork reversal (RFR). RuvA specifically binds to HJ cruciform DNA, conferring on it an open structure. The RuvB hexamer acts as an ATP-dependent pump, pulling dsDNA into and through the RuvAB complex. HJ branch migration allows RuvC to scan DNA until it finds its consensus sequence, where it cleaves and resolves the cruciform DNA. This Hamiltonella defensa subsp. Acyrthosiphon pisum (strain 5AT) protein is Holliday junction branch migration complex subunit RuvA.